Consider the following 516-residue polypeptide: Cytochrome P450 1A2 (516 aa).

O-linked (GlcNAc) serine glycosylation occurs at serine 69. Phenylalanine 226 is a binding site for substrate. Residue cysteine 458 participates in heme binding.

This sequence belongs to the cytochrome P450 family. As to quaternary structure, interacts with PGRMC1; the interaction requires PGRMC1 homodimerization. Heme is required as a cofactor.

It localises to the endoplasmic reticulum membrane. Its subcellular location is the microsome membrane. It carries out the reaction an organic molecule + reduced [NADPH--hemoprotein reductase] + O2 = an alcohol + oxidized [NADPH--hemoprotein reductase] + H2O + H(+). It catalyses the reaction 17beta-estradiol + reduced [NADPH--hemoprotein reductase] + O2 = 2-hydroxy-17beta-estradiol + oxidized [NADPH--hemoprotein reductase] + H2O + H(+). The enzyme catalyses 17beta-estradiol + reduced [NADPH--hemoprotein reductase] + O2 = 4-hydroxy-17beta-estradiol + oxidized [NADPH--hemoprotein reductase] + H2O + H(+). The catalysed reaction is estrone + reduced [NADPH--hemoprotein reductase] + O2 = 2-hydroxyestrone + oxidized [NADPH--hemoprotein reductase] + H2O + H(+). It carries out the reaction estrone + reduced [NADPH--hemoprotein reductase] + O2 = 4-hydroxyestrone + oxidized [NADPH--hemoprotein reductase] + H2O + H(+). It catalyses the reaction cholesterol + reduced [NADPH--hemoprotein reductase] + O2 = 25-hydroxycholesterol + oxidized [NADPH--hemoprotein reductase] + H2O + H(+). The enzyme catalyses all-trans-retinol + reduced [NADPH--hemoprotein reductase] + O2 = all-trans-retinal + oxidized [NADPH--hemoprotein reductase] + 2 H2O + H(+). The catalysed reaction is all-trans-retinal + reduced [NADPH--hemoprotein reductase] + O2 = all-trans-retinoate + oxidized [NADPH--hemoprotein reductase] + H2O + 2 H(+). It carries out the reaction (5Z,8Z,11Z,14Z)-eicosatetraenoate + reduced [NADPH--hemoprotein reductase] + O2 = (14R,15S)-epoxy-(5Z,8Z,11Z)-eicosatrienoate + oxidized [NADPH--hemoprotein reductase] + H2O + H(+). It catalyses the reaction (5Z,8Z,11Z,14Z)-eicosatetraenoate + reduced [NADPH--hemoprotein reductase] + O2 = (14S,15R)-epoxy-(5Z,8Z,11Z)-eicosatrienoate + oxidized [NADPH--hemoprotein reductase] + H2O + H(+). The enzyme catalyses (5Z,8Z,11Z,14Z,17Z)-eicosapentaenoate + reduced [NADPH--hemoprotein reductase] + O2 = (17R,18S)-epoxy-(5Z,8Z,11Z,14Z)-eicosatetraenoate + oxidized [NADPH--hemoprotein reductase] + H2O + H(+). The catalysed reaction is (4Z,7Z,10Z,13Z,16Z,19Z)-docosahexaenoate + reduced [NADPH--hemoprotein reductase] + O2 = (19R,20S)-epoxy-(4Z,7Z,10Z,13Z,16Z)-docosapentaenoate + oxidized [NADPH--hemoprotein reductase] + H2O + H(+). It carries out the reaction (5S)-hydroperoxy-(6E,8Z,11Z,14Z)-eicosatetraenoate = 5-oxo-(6E,8Z,11Z,14Z)-eicosatetraenoate + H2O. It catalyses the reaction (12S)-hydroperoxy-(5Z,8Z,10E,14Z)-eicosatetraenoate = 12-oxo-(5Z,8Z,10E,14Z)-eicosatetraenoate + H2O. The enzyme catalyses (15S)-hydroperoxy-(5Z,8Z,11Z,13E)-eicosatetraenoate = 15-oxo-(5Z,8Z,11Z,13E)-eicosatetraenoate + H2O. The catalysed reaction is (13S)-hydroperoxy-(9Z,11E)-octadecadienoate = 13-oxo-(9Z,11E)-octadecadienoate + H2O. It carries out the reaction (5Z,8Z,11Z,14Z)-eicosatetraenoate + reduced [NADPH--hemoprotein reductase] + O2 = 13-hydroxy-(5Z,8Z,11Z,14Z)-eicosatetraenoate + oxidized [NADPH--hemoprotein reductase] + H2O + H(+). It catalyses the reaction (5Z,8Z,11Z,14Z)-eicosatetraenoate + reduced [NADPH--hemoprotein reductase] + O2 = 19-hydroxy-(5Z,8Z,11Z,14Z)-eicosatetraenoate + oxidized [NADPH--hemoprotein reductase] + H2O + H(+). The enzyme catalyses (9Z,12Z)-octadecadienoate + reduced [NADPH--hemoprotein reductase] + O2 = 11-hydroxy-(9Z,12Z)-octadecadienoate + oxidized [NADPH--hemoprotein reductase] + H2O + H(+). The protein operates within cofactor metabolism; retinol metabolism. Its pathway is steroid metabolism; cholesterol metabolism. It participates in lipid metabolism; arachidonate metabolism. A cytochrome P450 monooxygenase involved in the metabolism of various endogenous substrates, including fatty acids, steroid hormones and vitamins. Mechanistically, uses molecular oxygen inserting one oxygen atom into a substrate, and reducing the second into a water molecule, with two electrons provided by NADPH via cytochrome P450 reductase (NADPH--hemoprotein reductase). Catalyzes the hydroxylation of carbon-hydrogen bonds. Exhibits high catalytic activity for the formation of hydroxyestrogens from estrone (E1) and 17beta-estradiol (E2), namely 2-hydroxy E1 and E2. Metabolizes cholesterol toward 25-hydroxycholesterol, a physiological regulator of cellular cholesterol homeostasis. May act as a major enzyme for all-trans retinoic acid biosynthesis in the liver. Catalyzes two successive oxidative transformation of all-trans retinol to all-trans retinal and then to the active form all-trans retinoic acid. Primarily catalyzes stereoselective epoxidation of the last double bond of polyunsaturated fatty acids (PUFA), displaying a strong preference for the (R,S) stereoisomer. Catalyzes bisallylic hydroxylation and omega-1 hydroxylation of PUFA. May also participate in eicosanoids metabolism by converting hydroperoxide species into oxo metabolites (lipoxygenase-like reaction, NADPH-independent). Plays a role in the oxidative metabolism of xenobiotics. Catalyzes the N-hydroxylation of heterocyclic amines and the O-deethylation of phenacetin. Metabolizes caffeine via N3-demethylation. The sequence is that of Cytochrome P450 1A2 (CYP1A2) from Balaenoptera acutorostrata (Common minke whale).